The primary structure comprises 96 residues: MVEFSHTKKIGSAGRFGARYGRKVRVRVRDVEIKQKKAYKCPVCGFMKLKRISTSIWECKKCGAKMAGGAYTPETGAGKVVAKAIRRVIESKTKEI.

A C4-type zinc finger spans residues 41–62 (CPVCGFMKLKRISTSIWECKKC).

Belongs to the eukaryotic ribosomal protein eL43 family. The cofactor is Zn(2+).

In Methanococcus aeolicus (strain ATCC BAA-1280 / DSM 17508 / OCM 812 / Nankai-3), this protein is Large ribosomal subunit protein eL43.